The chain runs to 86 residues: MNYLILISFALLVITGVESARDAYIAKPHNCVYECFDAFSSYCNGVCTKNGAKSGYCQILGTYGNGCWCIVLPDNVPIRIPGKCHR.

Residues 1–19 (MNYLILISFALLVITGVES) form the signal peptide. One can recognise an LCN-type CS-alpha/beta domain in the interval 21-85 (RDAYIAKPHN…VPIRIPGKCH (65 aa)). 4 disulfide bridges follow: cysteine 31–cysteine 84, cysteine 35–cysteine 57, cysteine 43–cysteine 67, and cysteine 47–cysteine 69. Arginine 86 is a propeptide (removed by a carboxypeptidase).

The protein belongs to the long (4 C-C) scorpion toxin superfamily. Sodium channel inhibitor family. Alpha subfamily. In terms of tissue distribution, expressed by the venom gland.

It localises to the secreted. Its function is as follows. Alpha toxins bind voltage-independently at site-3 of sodium channels (Nav) and inhibit the inactivation of the activated channels, thereby blocking neuronal transmission. This toxin inhibits inactivation of drosophila DmNav1 (EC(50)=130 nM). This chain is Sodium channel neurotoxin MeuNaTxalpha-4, found in Mesobuthus eupeus (Lesser Asian scorpion).